The sequence spans 320 residues: N-acetylneuraminate lyase (320 aa).

The aceneuramate site is built by Thr51 and Thr52. The active-site Proton donor is Tyr143. The active-site Schiff-base intermediate with substrate is the Lys173. Residues Thr175, Gly199, Asp201, Glu202, and Ser218 each contribute to the aceneuramate site. Phosphoserine is present on Ser308.

This sequence belongs to the DapA family. NanA subfamily. As to quaternary structure, homotetramer.

It is found in the cytoplasm. It catalyses the reaction aceneuramate = aldehydo-N-acetyl-D-mannosamine + pyruvate. Its pathway is amino-sugar metabolism; N-acetylneuraminate degradation. Catalyzes the cleavage of N-acetylneuraminic acid (sialic acid) to form pyruvate and N-acetylmannosamine via a Schiff base intermediate. It prevents sialic acids from being recycled and returning to the cell surface. Involved in the N-glycolylneuraminic acid (Neu5Gc) degradation pathway. This Mus musculus (Mouse) protein is N-acetylneuraminate lyase.